Consider the following 415-residue polypeptide: Imidazolonepropionase (415 aa).

Fe(3+) contacts are provided by histidine 75 and histidine 77. 2 residues coordinate Zn(2+): histidine 75 and histidine 77. 4-imidazolone-5-propanoate is bound by residues arginine 84, tyrosine 147, and histidine 180. Residue tyrosine 147 coordinates N-formimidoyl-L-glutamate. Histidine 245 serves as a coordination point for Fe(3+). Histidine 245 is a Zn(2+) binding site. 4-imidazolone-5-propanoate is bound at residue glutamine 248. Aspartate 320 lines the Fe(3+) pocket. Aspartate 320 contributes to the Zn(2+) binding site. The N-formimidoyl-L-glutamate site is built by asparagine 322 and glycine 324. Threonine 325 contributes to the 4-imidazolone-5-propanoate binding site.

This sequence belongs to the metallo-dependent hydrolases superfamily. HutI family. Requires Zn(2+) as cofactor. It depends on Fe(3+) as a cofactor.

It localises to the cytoplasm. It carries out the reaction 4-imidazolone-5-propanoate + H2O = N-formimidoyl-L-glutamate. Its pathway is amino-acid degradation; L-histidine degradation into L-glutamate; N-formimidoyl-L-glutamate from L-histidine: step 3/3. Its function is as follows. Catalyzes the hydrolytic cleavage of the carbon-nitrogen bond in imidazolone-5-propanoate to yield N-formimidoyl-L-glutamate. It is the third step in the universal histidine degradation pathway. In Photorhabdus laumondii subsp. laumondii (strain DSM 15139 / CIP 105565 / TT01) (Photorhabdus luminescens subsp. laumondii), this protein is Imidazolonepropionase.